Consider the following 501-residue polypeptide: Myrosinase MA1 (501 aa).

3 disulfides stabilise this stretch: Cys-6–Cys-438, Cys-14–Cys-434, and Cys-206–Cys-214. Asn-21 carries an N-linked (GlcNAc...) asparagine glycan. Residue Gln-39 participates in substrate binding. His-56 is a Zn(2+) binding site. Asn-60 carries an N-linked (GlcNAc...) asparagine glycan. A Zn(2+)-binding site is contributed by Asp-70. Asn-90 carries N-linked (GlcNAc...) asparagine glycosylation. Substrate-binding residues include His-141 and Asn-186. Gln-187 provides a ligand contact to L-ascorbate. N-linked (GlcNAc...) asparagine glycans are attached at residues Asn-218 and Asn-244. Arg-259 is an L-ascorbate binding site. 2 N-linked (GlcNAc...) asparagine glycosylation sites follow: Asn-265 and Asn-292. Position 330 (Tyr-330) interacts with substrate. N-linked (GlcNAc...) asparagine glycosylation is found at Asn-343, Asn-346, and Asn-361. The Nucleophile role is filled by Glu-409. Substrate contacts are provided by residues Trp-457 and 464–465 (EF). Residue Asn-482 is glycosylated (N-linked (GlcNAc...) asparagine).

The protein belongs to the glycosyl hydrolase 1 family. Homodimer. In vacuoles called myrosin grains of a certain class of cells, myrosin cells, distributed in the cotyledons and the axis of the embryo as well as in different organs of the growing plant.

It localises to the vacuole. The enzyme catalyses a thioglucoside + H2O = a sugar + a thiol.. Functionally, degradation of glucosinolates (glucose residue linked by a thioglucoside bound to an amino acid derivative) to glucose, sulfate and any of the products: thiocyanates, isothiocyanates, nitriles, epithionitriles or oxazolidine-2-thiones. This is Myrosinase MA1 from Sinapis alba (White mustard).